The sequence spans 309 residues: 2-phospho-L-lactate transferase (309 aa).

Residues Asp-50 and Lys-89 each contribute to the 7,8-didemethyl-8-hydroxy-5-deazariboflavin site.

It belongs to the CofD family. Homodimer. Mg(2+) serves as cofactor.

The enzyme catalyses (2S)-lactyl-2-diphospho-5'-guanosine + 7,8-didemethyl-8-hydroxy-5-deazariboflavin = oxidized coenzyme F420-0 + GMP + H(+). It functions in the pathway cofactor biosynthesis; coenzyme F420 biosynthesis. Catalyzes the transfer of the 2-phospholactate moiety from (2S)-lactyl-2-diphospho-5'-guanosine to 7,8-didemethyl-8-hydroxy-5-deazariboflavin (FO) with the formation of oxidized coenzyme F420-0 and GMP. The polypeptide is 2-phospho-L-lactate transferase (Methanococcus maripaludis (strain C7 / ATCC BAA-1331)).